Reading from the N-terminus, the 275-residue chain is Ribosomal RNA small subunit methyltransferase A (275 aa).

The S-adenosyl-L-methionine site is built by asparagine 19, leucine 21, glycine 46, glutamate 71, aspartate 94, and asparagine 117.

This sequence belongs to the class I-like SAM-binding methyltransferase superfamily. rRNA adenine N(6)-methyltransferase family. RsmA subfamily.

The protein localises to the cytoplasm. It carries out the reaction adenosine(1518)/adenosine(1519) in 16S rRNA + 4 S-adenosyl-L-methionine = N(6)-dimethyladenosine(1518)/N(6)-dimethyladenosine(1519) in 16S rRNA + 4 S-adenosyl-L-homocysteine + 4 H(+). Specifically dimethylates two adjacent adenosines (A1518 and A1519) in the loop of a conserved hairpin near the 3'-end of 16S rRNA in the 30S particle. May play a critical role in biogenesis of 30S subunits. This Burkholderia orbicola (strain MC0-3) protein is Ribosomal RNA small subunit methyltransferase A.